A 788-amino-acid chain; its full sequence is Auxin response factor 4 (788 aa).

A compositionally biased stretch (acidic residues) spans 1–19; sequence MEFDLNTEIAEVEEEENDD. The disordered stretch occupies residues 1–53; the sequence is MEFDLNTEIAEVEEEENDDVGVGVGGGTRIDKGRLGISPSSSSSCSSGSSSSS. Over residues 38 to 53 the composition is skewed to low complexity; sequence SPSSSSSCSSGSSSSS. A DNA-binding region (TF-B3) is located at residues 177–279; that stretch reads FCKTLTASDT…ELRLGIRRAA (103 aa). The tract at residues 413–433 is disordered; sequence LSIQSSPRPKRPWAGLLDTTP. Positions 665–747 constitute a PB1 domain; that stretch reads RICTKVHKQG…VVWKIHLYTK (83 aa).

The protein belongs to the ARF family. In terms of assembly, homodimers and heterodimers. Expressed in the whole plant.

It localises to the nucleus. Its function is as follows. Auxin response factors (ARFs) are transcriptional factors that bind specifically to the DNA sequence 5'-TGTCTC-3' found in the auxin-responsive promoter elements (AuxREs). Could act as transcriptional activator or repressor. Formation of heterodimers with Aux/IAA proteins may alter their ability to modulate early auxin response genes expression. The chain is Auxin response factor 4 (ARF4) from Arabidopsis thaliana (Mouse-ear cress).